The primary structure comprises 727 residues: 1,4-alpha-glucan branching enzyme GlgB (727 aa).

Asp-405 (nucleophile) is an active-site residue. Catalysis depends on Glu-458, which acts as the Proton donor.

It belongs to the glycosyl hydrolase 13 family. GlgB subfamily. Monomer.

It catalyses the reaction Transfers a segment of a (1-&gt;4)-alpha-D-glucan chain to a primary hydroxy group in a similar glucan chain.. Its pathway is glycan biosynthesis; glycogen biosynthesis. Functionally, catalyzes the formation of the alpha-1,6-glucosidic linkages in glycogen by scission of a 1,4-alpha-linked oligosaccharide from growing alpha-1,4-glucan chains and the subsequent attachment of the oligosaccharide to the alpha-1,6 position. The sequence is that of 1,4-alpha-glucan branching enzyme GlgB from Yersinia pestis bv. Antiqua (strain Antiqua).